A 222-amino-acid polypeptide reads, in one-letter code: Eukaryotic translation initiation factor 3 subunit K (222 aa).

The region spanning Tyr-46–Lys-208 is the PCI domain.

The protein belongs to the eIF-3 subunit K family. In terms of assembly, component of the eukaryotic translation initiation factor 3 (eIF-3) complex. The eIF-3 complex interacts with pix.

Its subcellular location is the cytoplasm. Functionally, component of the eukaryotic translation initiation factor 3 (eIF-3) complex, which is involved in protein synthesis of a specialized repertoire of mRNAs and, together with other initiation factors, stimulates binding of mRNA and methionyl-tRNAi to the 40S ribosome. The eIF-3 complex specifically targets and initiates translation of a subset of mRNAs involved in cell proliferation. In Drosophila yakuba (Fruit fly), this protein is Eukaryotic translation initiation factor 3 subunit K.